A 229-amino-acid polypeptide reads, in one-letter code: Ribosomal RNA small subunit methyltransferase G (229 aa).

S-adenosyl-L-methionine contacts are provided by residues Gly-71, 122–123, and Arg-139; that span reads AE.

Belongs to the methyltransferase superfamily. RNA methyltransferase RsmG family.

The protein localises to the cytoplasm. Specifically methylates the N7 position of a guanine in 16S rRNA. This Thermotoga neapolitana (strain ATCC 49049 / DSM 4359 / NBRC 107923 / NS-E) protein is Ribosomal RNA small subunit methyltransferase G.